The sequence spans 463 residues: Rubisco accumulation factor 1, chloroplastic (463 aa).

Positions 1–18 (MLSLSHPHPHPAASTTAP) are enriched in low complexity. The transit peptide at 1–31 (MLSLSHPHPHPAASTTAPRHQRTAPVWHRRR) directs the protein to the chloroplast. The segment at 1–84 (MLSLSHPHPH…PFHPPPSPLP (84 aa)) is disordered. Over residues 19–33 (RHQRTAPVWHRRRAS) the composition is skewed to basic residues. Gly residues predominate over residues 43–53 (PGGGSTGGRGG). The interval 83–275 (LPPSLRNLDL…SGRARVELEL (193 aa)) is N-terminal alpha-helix. The stretch at 240–294 (RQSREAIDVQDRVAELERALQVVETESGRARVELELERARRKAAGEEEVDEEGEE) forms a coiled coil. The tract at residues 305-450 (VTVVRLRYGE…AEVVIVVRPP (146 aa)) is C-terminal beta sheet.

The protein belongs to the RAF family. Homotrimer. Expressed in bundle sheath.

The protein localises to the plastid. The protein resides in the chloroplast. Its function is as follows. Required for assembly or stability of RuBisCO. Acts at a postchaperonin step to fold and/or assemble the large subunit (LS) into RuBisCO. This Zea mays (Maize) protein is Rubisco accumulation factor 1, chloroplastic.